The primary structure comprises 274 residues: Eukaryotic translation initiation factor 3 subunit J (274 aa).

Disordered regions lie at residues 1 to 120 and 227 to 246; these read MSGK…DLKH and EEKA…TKTS. Residues 30–50 are compositionally biased toward acidic residues; it reads DEEGNESDVLDSWDAAEDSEV. The stretch at 46–112 forms a coiled coil; sequence EDSEVEREKA…AERRERLRRE (67 aa). Composition is skewed to basic and acidic residues over residues 51–67 and 79–92; these read EREK…KAEA and RIAE…RQLA. A compositionally biased stretch (acidic residues) spans 93–102; it reads EDSDAEEETE. Over residues 103–120 the composition is skewed to basic and acidic residues; that stretch reads AERRERLRREQKESDLKH.

This sequence belongs to the eIF-3 subunit J family. Component of the eukaryotic translation initiation factor 3 (eIF-3) complex.

The protein localises to the cytoplasm. In terms of biological role, component of the eukaryotic translation initiation factor 3 (eIF-3) complex, which is involved in protein synthesis of a specialized repertoire of mRNAs and, together with other initiation factors, stimulates binding of mRNA and methionyl-tRNAi to the 40S ribosome. The eIF-3 complex specifically targets and initiates translation of a subset of mRNAs involved in cell proliferation. This chain is Eukaryotic translation initiation factor 3 subunit J (hcr-1), found in Neurospora crassa (strain ATCC 24698 / 74-OR23-1A / CBS 708.71 / DSM 1257 / FGSC 987).